The primary structure comprises 137 residues: Large ribosomal subunit protein uL16 (137 aa).

The protein belongs to the universal ribosomal protein uL16 family. As to quaternary structure, part of the 50S ribosomal subunit.

Functionally, binds 23S rRNA and is also seen to make contacts with the A and possibly P site tRNAs. The polypeptide is Large ribosomal subunit protein uL16 (Pseudomonas aeruginosa (strain LESB58)).